The sequence spans 265 residues: Ribonuclease 3 (265 aa).

In terms of domain architecture, RNase III spans 34 to 157; the sequence is LAVLTRKLGY…LIGAIYLDSQ (124 aa). A Mg(2+)-binding site is contributed by glutamate 70. The active site involves aspartate 74. The Mg(2+) site is built by aspartate 143 and glutamate 146. Glutamate 146 is a catalytic residue. A DRBM domain is found at 185 to 256; that stretch reads DAKSRLQEWL…AELMINQLHK (72 aa).

It belongs to the ribonuclease III family. In terms of assembly, homodimer. Requires Mg(2+) as cofactor.

It localises to the cytoplasm. The enzyme catalyses Endonucleolytic cleavage to 5'-phosphomonoester.. Functionally, digests double-stranded RNA. Involved in the processing of primary rRNA transcript to yield the immediate precursors to the large and small rRNAs (23S and 16S). Processes some mRNAs, and tRNAs when they are encoded in the rRNA operon. Processes pre-crRNA and tracrRNA of type II CRISPR loci if present in the organism. The polypeptide is Ribonuclease 3 (Psychrobacter arcticus (strain DSM 17307 / VKM B-2377 / 273-4)).